The following is a 357-amino-acid chain: Ferrochelatase (357 aa).

Fe cation contacts are provided by H193 and E272.

This sequence belongs to the ferrochelatase family.

The protein resides in the cytoplasm. It carries out the reaction heme b + 2 H(+) = protoporphyrin IX + Fe(2+). Its pathway is porphyrin-containing compound metabolism; protoheme biosynthesis; protoheme from protoporphyrin-IX: step 1/1. In terms of biological role, catalyzes the ferrous insertion into protoporphyrin IX. The sequence is that of Ferrochelatase from Hyphomonas neptunium (strain ATCC 15444).